The sequence spans 57 residues: DNA-directed RNA polymerase subunit Rpo6 (57 aa).

The protein belongs to the archaeal Rpo6/eukaryotic RPB6 RNA polymerase subunit family. As to quaternary structure, part of the RNA polymerase complex.

Its subcellular location is the cytoplasm. It catalyses the reaction RNA(n) + a ribonucleoside 5'-triphosphate = RNA(n+1) + diphosphate. DNA-dependent RNA polymerase (RNAP) catalyzes the transcription of DNA into RNA using the four ribonucleoside triphosphates as substrates. In Thermococcus gammatolerans (strain DSM 15229 / JCM 11827 / EJ3), this protein is DNA-directed RNA polymerase subunit Rpo6.